Consider the following 489-residue polypeptide: Ketol-acid reductoisomerase (NADP(+)) (489 aa).

Residues 17–208 (LGVCEFMEQS…GGHKAGVLRS (192 aa)) enclose the KARI N-terminal Rossmann domain. NADP(+) is bound by residues 45 to 48 (CGAQ), Arg68, Arg76, Ser78, and 108 to 110 (DKQ). His132 is an active-site residue. Gly158 contributes to the NADP(+) binding site. KARI C-terminal knotted domains are found at residues 209–344 (SFVA…KTAP) and 345–485 (QEAP…MTAM). Positions 217, 221, 389, and 393 each coordinate Mg(2+). Ser414 provides a ligand contact to substrate.

The protein belongs to the ketol-acid reductoisomerase family. Requires Mg(2+) as cofactor.

It catalyses the reaction (2R)-2,3-dihydroxy-3-methylbutanoate + NADP(+) = (2S)-2-acetolactate + NADPH + H(+). It carries out the reaction (2R,3R)-2,3-dihydroxy-3-methylpentanoate + NADP(+) = (S)-2-ethyl-2-hydroxy-3-oxobutanoate + NADPH + H(+). It participates in amino-acid biosynthesis; L-isoleucine biosynthesis; L-isoleucine from 2-oxobutanoate: step 2/4. The protein operates within amino-acid biosynthesis; L-valine biosynthesis; L-valine from pyruvate: step 2/4. Its function is as follows. Involved in the biosynthesis of branched-chain amino acids (BCAA). Catalyzes an alkyl-migration followed by a ketol-acid reduction of (S)-2-acetolactate (S2AL) to yield (R)-2,3-dihydroxy-isovalerate. In the isomerase reaction, S2AL is rearranged via a Mg-dependent methyl migration to produce 3-hydroxy-3-methyl-2-ketobutyrate (HMKB). In the reductase reaction, this 2-ketoacid undergoes a metal-dependent reduction by NADPH to yield (R)-2,3-dihydroxy-isovalerate. In Flavobacterium johnsoniae (strain ATCC 17061 / DSM 2064 / JCM 8514 / BCRC 14874 / CCUG 350202 / NBRC 14942 / NCIMB 11054 / UW101) (Cytophaga johnsonae), this protein is Ketol-acid reductoisomerase (NADP(+)).